Here is a 342-residue protein sequence, read N- to C-terminus: Biotin synthase (342 aa).

The Radical SAM core domain maps to 63–290 (NTVQLSTLLS…GAMVRLSAGR (228 aa)). [4Fe-4S] cluster-binding residues include C78, C82, and C85. Residues C122, C153, C213, and R285 each contribute to the [2Fe-2S] cluster site.

Belongs to the radical SAM superfamily. Biotin synthase family. Homodimer. It depends on [4Fe-4S] cluster as a cofactor. The cofactor is [2Fe-2S] cluster.

The catalysed reaction is (4R,5S)-dethiobiotin + (sulfur carrier)-SH + 2 reduced [2Fe-2S]-[ferredoxin] + 2 S-adenosyl-L-methionine = (sulfur carrier)-H + biotin + 2 5'-deoxyadenosine + 2 L-methionine + 2 oxidized [2Fe-2S]-[ferredoxin]. Its pathway is cofactor biosynthesis; biotin biosynthesis; biotin from 7,8-diaminononanoate: step 2/2. Its function is as follows. Catalyzes the conversion of dethiobiotin (DTB) to biotin by the insertion of a sulfur atom into dethiobiotin via a radical-based mechanism. The chain is Biotin synthase from Cupriavidus pinatubonensis (strain JMP 134 / LMG 1197) (Cupriavidus necator (strain JMP 134)).